Here is a 267-residue protein sequence, read N- to C-terminus: Ribosomal RNA small subunit methyltransferase A (267 aa).

N16, L18, G43, E64, D88, and N109 together coordinate S-adenosyl-L-methionine.

The protein belongs to the class I-like SAM-binding methyltransferase superfamily. rRNA adenine N(6)-methyltransferase family. RsmA subfamily.

Its subcellular location is the cytoplasm. The enzyme catalyses adenosine(1518)/adenosine(1519) in 16S rRNA + 4 S-adenosyl-L-methionine = N(6)-dimethyladenosine(1518)/N(6)-dimethyladenosine(1519) in 16S rRNA + 4 S-adenosyl-L-homocysteine + 4 H(+). Functionally, specifically dimethylates two adjacent adenosines (A1518 and A1519) in the loop of a conserved hairpin near the 3'-end of 16S rRNA in the 30S particle. May play a critical role in biogenesis of 30S subunits. This chain is Ribosomal RNA small subunit methyltransferase A, found in Acidithiobacillus ferrooxidans (strain ATCC 23270 / DSM 14882 / CIP 104768 / NCIMB 8455) (Ferrobacillus ferrooxidans (strain ATCC 23270)).